Consider the following 142-residue polypeptide: Putative phosphatidylglycerol/phosphatidylinositol transfer protein 2 (142 aa).

Positions 1 to 20 are cleaved as a signal peptide; it reads MKFYLYLSILLILLTSTSFG.

Belongs to the NPC2 family. Monomer.

Catalyzes the intermembrane transfer of phosphatidylglycerol and phosphatidylinositol. In Dictyostelium discoideum (Social amoeba), this protein is Putative phosphatidylglycerol/phosphatidylinositol transfer protein 2.